Reading from the N-terminus, the 183-residue chain is Ubiquitin carboxyl-terminal hydrolase 17-like protein 23 (183 aa).

The USP domain maps to 80–183; that stretch reads AGLQNMGNTC…KACLPGHKQV (104 aa).

Belongs to the peptidase C19 family. USP17 subfamily.

The protein resides in the nucleus. It localises to the endoplasmic reticulum. The protein is Ubiquitin carboxyl-terminal hydrolase 17-like protein 23 (USP17L23) of Homo sapiens (Human).